The following is a 167-amino-acid chain: Ribosome maturation factor RimP (167 aa).

The protein belongs to the RimP family.

Its subcellular location is the cytoplasm. Functionally, required for maturation of 30S ribosomal subunits. This Streptomyces griseus subsp. griseus (strain JCM 4626 / CBS 651.72 / NBRC 13350 / KCC S-0626 / ISP 5235) protein is Ribosome maturation factor RimP.